The chain runs to 177 residues: Large ribosomal subunit protein uL6 (177 aa).

Belongs to the universal ribosomal protein uL6 family. As to quaternary structure, part of the 50S ribosomal subunit.

Its function is as follows. This protein binds to the 23S rRNA, and is important in its secondary structure. It is located near the subunit interface in the base of the L7/L12 stalk, and near the tRNA binding site of the peptidyltransferase center. The sequence is that of Large ribosomal subunit protein uL6 from Alteromonas mediterranea (strain DSM 17117 / CIP 110805 / LMG 28347 / Deep ecotype).